Reading from the N-terminus, the 290-residue chain is Xyloglucan endotransglucosylase/hydrolase protein 3 (290 aa).

An N-terminal signal peptide occupies residues 1 to 21; sequence MDYMRIFSVFVVTLWIIRVDA. The 199-residue stretch at 22 to 220 folds into the GH16 domain; the sequence is RVFGGRGIEK…WSYSPFIAHF (199 aa). Glu109 serves as the catalytic Nucleophile. Glu113 serves as the catalytic Proton donor. Xyloglucan-binding positions include Glu113, 126 to 128, 136 to 138, 199 to 200, and Gly204; these read QTN, NRE, and DW. Asn210 carries N-linked (GlcNAc...) asparagine glycosylation. 2 disulfide bridges follow: Cys228–Cys240 and Cys276–Cys289.

The protein belongs to the glycosyl hydrolase 16 family. XTH group 1 subfamily. In terms of processing, contains at least one intrachain disulfide bond essential for its enzymatic activity. Predominantly expressed in flower buds.

The protein resides in the secreted. It is found in the cell wall. It localises to the extracellular space. The protein localises to the apoplast. It carries out the reaction breaks a beta-(1-&gt;4) bond in the backbone of a xyloglucan and transfers the xyloglucanyl segment on to O-4 of the non-reducing terminal glucose residue of an acceptor, which can be a xyloglucan or an oligosaccharide of xyloglucan.. Its function is as follows. Catalyzes xyloglucan endohydrolysis (XEH) and/or endotransglycosylation (XET). Cleaves and religates xyloglucan polymers, an essential constituent of the primary cell wall, and thereby participates in cell wall construction of growing tissues. The sequence is that of Xyloglucan endotransglucosylase/hydrolase protein 3 (XTH3) from Arabidopsis thaliana (Mouse-ear cress).